The chain runs to 311 residues: Pyrimidine-specific ribonucleoside hydrolase RihA (311 aa).

Histidine 240 is an active-site residue.

The protein belongs to the IUNH family. RihA subfamily.

Hydrolyzes with equal efficiency cytidine or uridine to ribose and cytosine or uracil, respectively. This Escherichia coli (strain K12 / MC4100 / BW2952) protein is Pyrimidine-specific ribonucleoside hydrolase RihA.